Consider the following 69-residue polypeptide: Cap-specific mRNA (nucleoside-2'-O-)-methyltransferase (69 aa).

Position 22 (Tyr-22) interacts with mRNA. Positions 39, 66, and 68 each coordinate S-adenosyl-L-methionine.

The protein belongs to the class I-like SAM-binding methyltransferase superfamily. Poxvirus/kinetoplastid 2'-O-MTase family. In terms of assembly, interacts with poly(A) polymerase catalytic subunit OPG063. Interacts with OPG109 and OPG123; these interactions might help linking transcription to capping and polyadenylation.

It is found in the virion. It catalyses the reaction a 5'-end (N(7)-methyl 5'-triphosphoguanosine)-ribonucleoside in mRNA + S-adenosyl-L-methionine = a 5'-end (N(7)-methyl 5'-triphosphoguanosine)-(2'-O-methyl-ribonucleoside) in mRNA + S-adenosyl-L-homocysteine + H(+). Displays methyltransferase, positive regulation of the poly(A) polymerase and transcription elongation activities. Involved in the modification of both mRNA ends and in intermediate and late gene positive transcription elongation. At the mRNAs 5' end, methylates the ribose 2' OH group of the first transcribed nucleotide, thereby producing a 2'-O-methylpurine cap. At the 3' end, functions as a processivity factor which stimulates the activity of the viral poly(A) polymerase OPG063 that creates mRNA's poly(A) tail. In the presence of OPG102, OPG063 does not dissociate from the RNA allowing tail elongation to around 250 adenylates. The protein is Cap-specific mRNA (nucleoside-2'-O-)-methyltransferase (OPG102) of Sus scrofa (Pig).